The sequence spans 258 residues: NAD kinase (258 aa).

Aspartate 51 serves as the catalytic Proton acceptor. Residues aspartate 51–glycine 52, arginine 56, asparagine 119–aspartate 120, lysine 130, aspartate 149, threonine 160–serine 165, and alanine 184 contribute to the NAD(+) site.

Belongs to the NAD kinase family. Requires a divalent metal cation as cofactor.

The protein localises to the cytoplasm. It catalyses the reaction NAD(+) + ATP = ADP + NADP(+) + H(+). In terms of biological role, involved in the regulation of the intracellular balance of NAD and NADP, and is a key enzyme in the biosynthesis of NADP. Catalyzes specifically the phosphorylation on 2'-hydroxyl of the adenosine moiety of NAD to yield NADP. The sequence is that of NAD kinase from Thermotoga neapolitana (strain ATCC 49049 / DSM 4359 / NBRC 107923 / NS-E).